A 482-amino-acid polypeptide reads, in one-letter code: Bifunctional protein GlmU (482 aa).

The segment at 1 to 238 (MSAIRPAAVV…HREIAGINNR (238 aa)) is pyrophosphorylase. UDP-N-acetyl-alpha-D-glucosamine-binding positions include 12–15 (LAAG), Lys26, Gln79, and 84–85 (GT). Mg(2+) is bound at residue Asp110. UDP-N-acetyl-alpha-D-glucosamine contacts are provided by Gly147, Glu163, Asn178, and Asn236. Asn236 contributes to the Mg(2+) binding site. A linker region spans residues 239–259 (VQLAEARRILNDRLLTRAMLA). Positions 260–482 (GVTVVDPATT…VASRKPEGED (223 aa)) are N-acetyltransferase. The UDP-N-acetyl-alpha-D-glucosamine site is built by Arg341 and Lys359. His371 serves as the catalytic Proton acceptor. UDP-N-acetyl-alpha-D-glucosamine contacts are provided by Tyr374 and Asn385. Acetyl-CoA-binding positions include Ala388, 394–395 (NY), Ser413, Ala431, and Arg448.

In the N-terminal section; belongs to the N-acetylglucosamine-1-phosphate uridyltransferase family. This sequence in the C-terminal section; belongs to the transferase hexapeptide repeat family. As to quaternary structure, homotrimer. Mg(2+) serves as cofactor.

Its subcellular location is the cytoplasm. The catalysed reaction is alpha-D-glucosamine 1-phosphate + acetyl-CoA = N-acetyl-alpha-D-glucosamine 1-phosphate + CoA + H(+). The enzyme catalyses N-acetyl-alpha-D-glucosamine 1-phosphate + UTP + H(+) = UDP-N-acetyl-alpha-D-glucosamine + diphosphate. It participates in nucleotide-sugar biosynthesis; UDP-N-acetyl-alpha-D-glucosamine biosynthesis; N-acetyl-alpha-D-glucosamine 1-phosphate from alpha-D-glucosamine 6-phosphate (route II): step 2/2. Its pathway is nucleotide-sugar biosynthesis; UDP-N-acetyl-alpha-D-glucosamine biosynthesis; UDP-N-acetyl-alpha-D-glucosamine from N-acetyl-alpha-D-glucosamine 1-phosphate: step 1/1. The protein operates within bacterial outer membrane biogenesis; LPS lipid A biosynthesis. Functionally, catalyzes the last two sequential reactions in the de novo biosynthetic pathway for UDP-N-acetylglucosamine (UDP-GlcNAc). The C-terminal domain catalyzes the transfer of acetyl group from acetyl coenzyme A to glucosamine-1-phosphate (GlcN-1-P) to produce N-acetylglucosamine-1-phosphate (GlcNAc-1-P), which is converted into UDP-GlcNAc by the transfer of uridine 5-monophosphate (from uridine 5-triphosphate), a reaction catalyzed by the N-terminal domain. The chain is Bifunctional protein GlmU from Streptomyces avermitilis (strain ATCC 31267 / DSM 46492 / JCM 5070 / NBRC 14893 / NCIMB 12804 / NRRL 8165 / MA-4680).